The sequence spans 338 residues: Putative pectinesterase 63 (338 aa).

An N-terminal signal peptide occupies residues Met1–Gly24. Residues Thr116 and Gln151 each contribute to the substrate site. The Proton donor role is filled by Asp174. The active-site Nucleophile is Asp195. Arg252 contacts substrate.

The protein belongs to the pectinesterase family.

Its subcellular location is the secreted. It localises to the cell wall. It carries out the reaction [(1-&gt;4)-alpha-D-galacturonosyl methyl ester](n) + n H2O = [(1-&gt;4)-alpha-D-galacturonosyl](n) + n methanol + n H(+). It participates in glycan metabolism; pectin degradation; 2-dehydro-3-deoxy-D-gluconate from pectin: step 1/5. In terms of biological role, acts in the modification of cell walls via demethylesterification of cell wall pectin. The protein is Putative pectinesterase 63 (PME63) of Arabidopsis thaliana (Mouse-ear cress).